We begin with the raw amino-acid sequence, 130 residues long: Histone H2A type 1-B/E (130 aa).

Residues 1–22 are disordered; that stretch reads MSGRGKQGGKARAKAKTRSSRA. N-acetylserine is present on Ser-2. A Phosphoserine; by RPS6KA5 modification is found at Ser-2. A Citrulline; alternate modification is found at Arg-4. Residue Arg-4 is modified to Symmetric dimethylarginine; by PRMT5; alternate. Lys-6 and Lys-10 each carry N6-(2-hydroxyisobutyryl)lysine; alternate. At Lys-6 the chain carries N6-acetyllysine; alternate. Over residues 7–19 the composition is skewed to basic residues; the sequence is QGGKARAKAKTRS. N6-(beta-hydroxybutyryl)lysine; alternate occurs at positions 10 and 14. The residue at position 10 (Lys-10) is an N6-lactoyllysine; alternate. Lys-10 carries the post-translational modification N6-succinyllysine; alternate. Residue Lys-14 forms a Glycyl lysine isopeptide (Lys-Gly) (interchain with G-Cter in ubiquitin); alternate linkage. A Glycyl lysine isopeptide (Lys-Gly) (interchain with G-Cter in ubiquitin) cross-link involves residue Lys-16. The residue at position 37 (Lys-37) is an N6-(2-hydroxyisobutyryl)lysine; alternate. Lys-37 carries the N6-(beta-hydroxybutyryl)lysine; alternate modification. At Lys-37 the chain carries N6-crotonyllysine; alternate. 2 positions are modified to N6-(2-hydroxyisobutyryl)lysine: Lys-75 and Lys-76. Lys-96 is modified (N6-(2-hydroxyisobutyryl)lysine; alternate). Lys-96 is subject to N6-(beta-hydroxybutyryl)lysine; alternate. Residue Lys-96 is modified to N6-succinyllysine; alternate. An N6-glutaryllysine; alternate modification is found at Lys-96. Gln-105 is subject to N5-methylglutamine. Lys-119 is modified (N6-(2-hydroxyisobutyryl)lysine; alternate). Lys-119 bears the N6-(beta-hydroxybutyryl)lysine; alternate mark. Residues Lys-119 and Lys-120 each carry the N6-crotonyllysine; alternate modification. N6-glutaryllysine; alternate occurs at positions 119 and 120. Lys-120 participates in a covalent cross-link: Glycyl lysine isopeptide (Lys-Gly) (interchain with G-Cter in ubiquitin); alternate. Phosphothreonine; by DCAF1 is present on Thr-121. N6-crotonyllysine; alternate is present on Lys-126. Lys-126 bears the N6-glutaryllysine; alternate mark.

The protein belongs to the histone H2A family. The nucleosome is a histone octamer containing two molecules each of H2A, H2B, H3 and H4 assembled in one H3-H4 heterotetramer and two H2A-H2B heterodimers. The octamer wraps approximately 147 bp of DNA. Deiminated on Arg-4 in granulocytes upon calcium entry. In terms of processing, monoubiquitination of Lys-120 (H2AK119Ub) by RING1, TRIM37 and RNF2/RING2 complex gives a specific tag for epigenetic transcriptional repression and participates in X chromosome inactivation of female mammals. It is involved in the initiation of both imprinted and random X inactivation. Ubiquitinated H2A is enriched in inactive X chromosome chromatin. Ubiquitination of H2A functions downstream of methylation of 'Lys-27' of histone H3 (H3K27me). H2AK119Ub by RNF2/RING2 can also be induced by ultraviolet and may be involved in DNA repair. Monoubiquitination of Lys-120 (H2AK119Ub) by TRIM37 may promote transformation of cells in a number of breast cancers. Following DNA double-strand breaks (DSBs), it is ubiquitinated through 'Lys-63' linkage of ubiquitin moieties by the E2 ligase UBE2N and the E3 ligases RNF8 and RNF168, leading to the recruitment of repair proteins to sites of DNA damage. Ubiquitination at Lys-14 and Lys-16 (H2AK13Ub and H2AK15Ub, respectively) in response to DNA damage is initiated by RNF168 that mediates monoubiquitination at these 2 sites, and 'Lys-63'-linked ubiquitin are then conjugated to monoubiquitin; RNF8 is able to extend 'Lys-63'-linked ubiquitin chains in vitro. Deubiquitinated by USP51 at Lys-14 and Lys-16 (H2AK13Ub and H2AK15Ub, respectively) after damaged DNA is repaired. H2AK119Ub and ionizing radiation-induced 'Lys-63'-linked ubiquitination (H2AK13Ub and H2AK15Ub) are distinct events. Post-translationally, phosphorylation on Ser-2 (H2AS1ph) is enhanced during mitosis. Phosphorylation on Ser-2 by RPS6KA5/MSK1 directly represses transcription. Acetylation of H3 inhibits Ser-2 phosphorylation by RPS6KA5/MSK1. Phosphorylation at Thr-121 (H2AT120ph) by DCAF1 is present in the regulatory region of many tumor suppresor genes and down-regulates their transcription. Glutamine methylation at Gln-105 (H2AQ104me) by FBL is specifically dedicated to polymerase I. It is present at 35S ribosomal DNA locus and impairs binding of the FACT complex. In terms of processing, symmetric dimethylation on Arg-4 by the PRDM1/PRMT5 complex may play a crucial role in the germ-cell lineage. Post-translationally, crotonylation (Kcr) is specifically present in male germ cells and marks testis-specific genes in post-meiotic cells, including X-linked genes that escape sex chromosome inactivation in haploid cells. Crotonylation marks active promoters and enhancers and confers resistance to transcriptional repressors. It is also associated with post-meiotically activated genes on autosomes. Lactylated in macrophages by EP300/P300 by using lactoyl-CoA directly derived from endogenous or exogenous lactate, leading to stimulates gene transcription.

The protein localises to the nucleus. Its subcellular location is the chromosome. In terms of biological role, core component of nucleosome. Nucleosomes wrap and compact DNA into chromatin, limiting DNA accessibility to the cellular machineries which require DNA as a template. Histones thereby play a central role in transcription regulation, DNA repair, DNA replication and chromosomal stability. DNA accessibility is regulated via a complex set of post-translational modifications of histones, also called histone code, and nucleosome remodeling. This is Histone H2A type 1-B/E from Homo sapiens (Human).